Here is a 292-residue protein sequence, read N- to C-terminus: MKLAILSRNSTLYSTRRLVEAARARGHTVRILDPLRCYMRIAADGFSMHYKGRPMTGVDMVIPRIGASITRYGTAVLRQFELMGARTPNPSDAILRSRDKLRAHQLLAAKGIDMPVTVFGDNPDDTVDLLSMLGPPPHVVKLNEGTQGRGVILTEKASASRGIVEALRGLYANFLMQEFIGEAKGADLRCFVVGDQVVASMQRQAPEGDFRSNLHAGGTAVAAKASRAEQQVAVRSAKALGLSVCGVDLIRSARGPLVLEINSTPGLEGIEAACGVDVATRIIEHVEKLRKP.

The ATP-grasp domain occupies 104 to 287; it reads HQLLAAKGID…VATRIIEHVE (184 aa). ATP-binding positions include Lys-141, 178-179, Asp-187, and 211-213; these read EF and RSN. Mg(2+) contacts are provided by Asp-248, Glu-260, and Asn-262. Mn(2+) contacts are provided by Asp-248, Glu-260, and Asn-262.

Belongs to the RimK family. Requires Mg(2+) as cofactor. Mn(2+) serves as cofactor.

This is Probable alpha-L-glutamate ligase from Stenotrophomonas maltophilia (strain R551-3).